A 437-amino-acid chain; its full sequence is MNLIAVGVNHNTAPIELREKISLTDSMARSLLTELIDSKLASEALVLSTCNRTELYVVPAMPEVTANYLKDYLIAHKGVRKEVTRDHFFNYFACGAARHFYNVACAIDSLILGEVQIIGQVKTAYNRAVEMKTVGPILNKMCHTGFGLANRVRSKTKLTAGAVSVSYAAVELTQKIYSDVSTKNILLVGAGDTAKLAAKNLLDKRVRDFYITNRTYEKAELLAQELGTGKILPLEEMTERLHEFDIVVTAVGGNDHIIKKEHVAAAMQKRHRDPILILDLGLPRNVAPEVGQVNNVFLKDIDDLKMIIDSNLEKRRAEIPKVKHFIQKELIEYARWYFSLEVKPTIVDLQEKFFEIKALELARIKNKVSAEEYERMEQLSDRIIKKLLHFPITTLKQQTADTTDPVSFIRNIFDLKEQEEEFPGLTFPINLKEQNNN.

Residues 49–52, serine 109, 114–116, and glutamine 120 each bind substrate; these read TCNR and EVQ. The Nucleophile role is filled by cysteine 50. 189–194 contributes to the NADP(+) binding site; sequence GAGDTA.

Belongs to the glutamyl-tRNA reductase family. In terms of assembly, homodimer.

The catalysed reaction is (S)-4-amino-5-oxopentanoate + tRNA(Glu) + NADP(+) = L-glutamyl-tRNA(Glu) + NADPH + H(+). The protein operates within porphyrin-containing compound metabolism; protoporphyrin-IX biosynthesis; 5-aminolevulinate from L-glutamyl-tRNA(Glu): step 1/2. Its pathway is porphyrin-containing compound metabolism; chlorophyll biosynthesis. Its function is as follows. Catalyzes the NADPH-dependent reduction of glutamyl-tRNA(Glu) to glutamate 1-semialdehyde (GSA). The chain is Glutamyl-tRNA reductase from Chloroherpeton thalassium (strain ATCC 35110 / GB-78).